The sequence spans 729 residues: Fatty acid oxidation complex subunit alpha (729 aa).

The enoyl-CoA hydratase/isomerase stretch occupies residues 1-189 (MLYKGDTLYL…KIGLVDGVVK (189 aa)). Position 296 (aspartate 296) interacts with substrate. The segment at 311 to 729 (ETPKQAAVLG…ARLVGDLKTA (419 aa)) is 3-hydroxyacyl-CoA dehydrogenase. Residues methionine 324, aspartate 343, 400–402 (VVE), lysine 407, and serine 429 contribute to the NAD(+) site. Catalysis depends on histidine 450, which acts as the For 3-hydroxyacyl-CoA dehydrogenase activity. An NAD(+)-binding site is contributed by asparagine 453. Residues asparagine 500 and tyrosine 660 each coordinate substrate.

This sequence in the N-terminal section; belongs to the enoyl-CoA hydratase/isomerase family. The protein in the C-terminal section; belongs to the 3-hydroxyacyl-CoA dehydrogenase family. In terms of assembly, heterotetramer of two alpha chains (FadB) and two beta chains (FadA).

The enzyme catalyses a (3S)-3-hydroxyacyl-CoA + NAD(+) = a 3-oxoacyl-CoA + NADH + H(+). The catalysed reaction is a (3S)-3-hydroxyacyl-CoA = a (2E)-enoyl-CoA + H2O. It carries out the reaction a 4-saturated-(3S)-3-hydroxyacyl-CoA = a (3E)-enoyl-CoA + H2O. It catalyses the reaction (3S)-3-hydroxybutanoyl-CoA = (3R)-3-hydroxybutanoyl-CoA. The enzyme catalyses a (3Z)-enoyl-CoA = a 4-saturated (2E)-enoyl-CoA. The catalysed reaction is a (3E)-enoyl-CoA = a 4-saturated (2E)-enoyl-CoA. It participates in lipid metabolism; fatty acid beta-oxidation. Its function is as follows. Involved in the aerobic and anaerobic degradation of long-chain fatty acids via beta-oxidation cycle. Catalyzes the formation of 3-oxoacyl-CoA from enoyl-CoA via L-3-hydroxyacyl-CoA. It can also use D-3-hydroxyacyl-CoA and cis-3-enoyl-CoA as substrate. In Escherichia coli (strain SE11), this protein is Fatty acid oxidation complex subunit alpha.